The sequence spans 250 residues: 3-deoxy-manno-octulosonate cytidylyltransferase (250 aa).

This sequence belongs to the KdsB family.

Its subcellular location is the cytoplasm. It carries out the reaction 3-deoxy-alpha-D-manno-oct-2-ulosonate + CTP = CMP-3-deoxy-beta-D-manno-octulosonate + diphosphate. It participates in nucleotide-sugar biosynthesis; CMP-3-deoxy-D-manno-octulosonate biosynthesis; CMP-3-deoxy-D-manno-octulosonate from 3-deoxy-D-manno-octulosonate and CTP: step 1/1. The protein operates within bacterial outer membrane biogenesis; lipopolysaccharide biosynthesis. Activates KDO (a required 8-carbon sugar) for incorporation into bacterial lipopolysaccharide in Gram-negative bacteria. In Rhodopirellula baltica (strain DSM 10527 / NCIMB 13988 / SH1), this protein is 3-deoxy-manno-octulosonate cytidylyltransferase.